The chain runs to 80 residues: DNA-binding protein HU-like (80 aa).

It belongs to the bacterial histone-like protein family.

Its function is as follows. Histone-like DNA-binding protein which is capable of wrapping DNA to stabilize it, and thus to prevent its denaturation under extreme environmental conditions. The chain is DNA-binding protein HU-like from Rickettsia prowazekii (strain Madrid E).